The primary structure comprises 267 residues: Indole-3-glycerol phosphate synthase (267 aa).

The protein belongs to the TrpC family.

It catalyses the reaction 1-(2-carboxyphenylamino)-1-deoxy-D-ribulose 5-phosphate + H(+) = (1S,2R)-1-C-(indol-3-yl)glycerol 3-phosphate + CO2 + H2O. It participates in amino-acid biosynthesis; L-tryptophan biosynthesis; L-tryptophan from chorismate: step 4/5. The chain is Indole-3-glycerol phosphate synthase from Delftia acidovorans (strain DSM 14801 / SPH-1).